The sequence spans 148 residues: Small ribosomal subunit protein uS7m (148 aa).

Belongs to the universal ribosomal protein uS7 family. In terms of assembly, part of the small ribosomal subunit.

It is found in the mitochondrion. Functionally, one of the primary rRNA binding proteins, it binds directly to 18S rRNA where it nucleates assembly of the head domain of the small subunit. This chain is Small ribosomal subunit protein uS7m (RPS7), found in Arabidopsis thaliana (Mouse-ear cress).